The primary structure comprises 87 residues: Small ribosomal subunit protein uS15c (87 aa).

Belongs to the universal ribosomal protein uS15 family. Part of the 30S ribosomal subunit.

The protein localises to the plastid. The protein resides in the chloroplast. The polypeptide is Small ribosomal subunit protein uS15c (rps15) (Illicium oligandrum (Star anise)).